Here is a 409-residue protein sequence, read N- to C-terminus: Serine/threonine transporter SstT (409 aa).

9 consecutive transmembrane segments (helical) span residues 15–35 (LSLVTQIVIGLIAGIALALLA), 49–69 (FVSALKAVAPILVFVLVMASI), 82–102 (PILVLYLLGTFAAAVVAVIAS), 142–162 (ALMNANFIGILAWAIGMGVAI), 193–213 (LGIFGLVASTLATSGFNALLG), 218–238 (LAVLIGCMLFVALVMNPLIVF), 301–321 (GAAITITVLTLAAVHTLGIAV), 331–351 (VVAAICACGASGVAGGSLLLI), and 357–377 (LFGIPSEIAMQVVAVGFIIGV).

It belongs to the dicarboxylate/amino acid:cation symporter (DAACS) (TC 2.A.23) family.

Its subcellular location is the cell inner membrane. The enzyme catalyses L-serine(in) + Na(+)(in) = L-serine(out) + Na(+)(out). It catalyses the reaction L-threonine(in) + Na(+)(in) = L-threonine(out) + Na(+)(out). Its function is as follows. Involved in the import of serine and threonine into the cell, with the concomitant import of sodium (symport system). This is Serine/threonine transporter SstT from Pseudomonas fluorescens (strain ATCC BAA-477 / NRRL B-23932 / Pf-5).